The chain runs to 118 residues: Autophagy-related protein 8 (118 aa).

G116 is lipidated: Phosphatidylethanolamine amidated glycine. A propeptide spans 117 to 118 (removed in mature form); that stretch reads SI.

The protein belongs to the ATG8 family. In terms of assembly, conjugation to phosphatidylethanolamine (PE) leads to homodimerization. Interacts with ATG1, ATG3, ATG4, ATG7 and ATG12. Post-translationally, the C-terminal Ser-117 and Ile-118 residues of ATG8 are removed by ATG4 to expose Gly-116 at the C-terminus. This Gly-116 forms then a thioester bond with ATG7 (E1-like activating enzyme) before being transferred to ATG3 (the specific E2 conjugating enzyme), in order to be finally amidated with phosphatidylethanolamine. This lipid modification anchors ATG8 to membranes and can be reversed by ATG4, releasing soluble ATG8.

The protein localises to the cytoplasmic vesicle. Its subcellular location is the cvt vesicle membrane. The protein resides in the autophagosome membrane. It localises to the vacuole membrane. Functionally, ubiquitin-like modifier involved in cytoplasm to vacuole transport (Cvt) vesicles and autophagosome formation. With ATG4, mediates the delivery of the vesicles and autophagosomes to the vacuole via the microtubule cytoskeleton. Required for selective autophagic degradation of the nucleus (nucleophagy) as well as for mitophagy which contributes to regulate mitochondrial quantity and quality by eliminating the mitochondria to a basal level to fulfill cellular energy requirements and preventing excess ROS production. Also participates in membrane fusion events that take place in the early secretory pathway. Also involved in endoplasmic reticulum-specific autophagic process and is essential for the survival of cells subjected to severe ER stress. The ATG8-PE conjugate mediates tethering between adjacent membranes and stimulates membrane hemifusion, leading to expansion of the autophagosomal membrane during autophagy. Moreover not only conjugation, but also subsequent ATG8-PE deconjugation is an important step required to facilitate multiple events during macroautophagy, and especially for efficient autophagosome biogenesis, the assembly of ATG9-containing tubulovesicular clusters into phagophores/autophagosomes, and for the disassembly of PAS-associated ATG components. Contributes to conidiation by regulating the conidial levels of the conidiation-related protein CP15 and mediates fungal oxidation resistance by controlling total superoxide dismutase (SOD) activity. The sequence is that of Autophagy-related protein 8 from Beauveria bassiana (strain ARSEF 2860) (White muscardine disease fungus).